We begin with the raw amino-acid sequence, 147 residues long: Large ribosomal subunit protein bL9 (147 aa).

This sequence belongs to the bacterial ribosomal protein bL9 family.

In terms of biological role, binds to the 23S rRNA. This chain is Large ribosomal subunit protein bL9, found in Cytophaga hutchinsonii (strain ATCC 33406 / DSM 1761 / CIP 103989 / NBRC 15051 / NCIMB 9469 / D465).